The primary structure comprises 381 residues: MKYISILGASGSIGTQTLDIIRSHPDEFQLTAISIGKNVDMARAIIEEFAPRLVAVAEADAYEKLRSEYAGKVKIVFGEEGLIEAAAFPETDIVVTAVVGSVGLVPTLRAIEAGKTIALANKETLVTAGHIVTAAAKKHGVSLLPVDSEHSAIFQCLQGEKRNRVEKIILTASGGSFRDKTREELKNVTVEEALRHPNWSMGAKITIDSATMMNKGLEVIEAHWLFELPYEQIDVLLHRESIIHSLVQFRDTSVIAQLGTPDMHVPIQYALTYPERLPLANAKPLDLAEISTLHFERVDFERFRCLQLAYEAGKAGGSLPTVLNAANEEAVSAFLQGRIAFLTIEEYIERALERHEFVNEPSLEEIREIDAETRRYVRSLL.

NADPH is bound by residues serine 10, glycine 11, serine 12, isoleucine 13, glycine 36, lysine 37, asparagine 38, and asparagine 121. Residue lysine 122 coordinates 1-deoxy-D-xylulose 5-phosphate. An NADPH-binding site is contributed by glutamate 123. Aspartate 147 provides a ligand contact to Mn(2+). Serine 148, glutamate 149, serine 173, and histidine 196 together coordinate 1-deoxy-D-xylulose 5-phosphate. Glutamate 149 is a binding site for Mn(2+). An NADPH-binding site is contributed by glycine 202. Serine 209, asparagine 214, lysine 215, and glutamate 218 together coordinate 1-deoxy-D-xylulose 5-phosphate. Glutamate 218 lines the Mn(2+) pocket.

The protein belongs to the DXR family. Requires Mg(2+) as cofactor. Mn(2+) serves as cofactor.

The catalysed reaction is 2-C-methyl-D-erythritol 4-phosphate + NADP(+) = 1-deoxy-D-xylulose 5-phosphate + NADPH + H(+). It functions in the pathway isoprenoid biosynthesis; isopentenyl diphosphate biosynthesis via DXP pathway; isopentenyl diphosphate from 1-deoxy-D-xylulose 5-phosphate: step 1/6. In terms of biological role, catalyzes the NADPH-dependent rearrangement and reduction of 1-deoxy-D-xylulose-5-phosphate (DXP) to 2-C-methyl-D-erythritol 4-phosphate (MEP). In Geobacillus sp. (strain WCH70), this protein is 1-deoxy-D-xylulose 5-phosphate reductoisomerase.